The sequence spans 352 residues: MPECWDGEHDIETPYGLLHVVIRGSPKGNRPAILTYHDVGLNHKLCFNTLFNLEDMQEITKHFVVCHVDAPGQQVGASQFPQGYQFPSMEQLATMLPNVVQHFGFKYVIGIGVGAGAYVLAKFALIFPDLVEGLVLMNIDPNGKGWIDWAATKLSGLTSTLPDTVLSHLFSQEELVNNTELVQSYRQQISSVVNQANLQLFWNMYNSRRDLDINRPGTVPNAKTLRCPVMLVVGDNAPAEDGVVECNSKLDPTTTTFLKMADSGGLPQVTQPGKLTEAFKYFLQGMGYIAHLKDRRLSGGAVPSASMTRLARSRTASLTSASSVDGSRPQPCTHSDSSEGMGQVNHTMEVSC.

Residues S298, S317, and S323 each carry the phosphoserine modification. The interval 301–352 (AVPSASMTRLARSRTASLTSASSVDGSRPQPCTHSDSSEGMGQVNHTMEVSC) is disordered. The segment covering 308–323 (TRLARSRTASLTSASS) has biased composition (low complexity). A compositionally biased stretch (polar residues) spans 330 to 352 (QPCTHSDSSEGMGQVNHTMEVSC).

Belongs to the NDRG family. In terms of tissue distribution, expressed in the brain and heart, weakly in the kidney; most prominently in postnatal brain where it is expressed widely in the olfactory bulb, cerebral cortex, hippocampus, cerebellum, thalamus, and medulla oblongata.

It is found in the cytoplasm. Its subcellular location is the cytosol. Its function is as follows. Contributes to the maintenance of intracerebral BDNF levels within the normal range, which is necessary for the preservation of spatial learning and the resistance to neuronal cell death caused by ischemic stress. May enhance growth factor-induced ERK1 and ERK2 phosphorylation, including that induced by NGF. May attenuate NGF-promoted ELK1 phosphorylation in a microtubule-dependent manner. The sequence is that of Protein NDRG4 (Ndrg4) from Rattus norvegicus (Rat).